The following is a 305-amino-acid chain: Sulfate adenylyltransferase subunit 2 (305 aa).

The protein belongs to the PAPS reductase family. CysD subfamily. As to quaternary structure, heterodimer composed of CysD, the smaller subunit, and CysN.

The catalysed reaction is sulfate + ATP + H(+) = adenosine 5'-phosphosulfate + diphosphate. Its pathway is sulfur metabolism; hydrogen sulfide biosynthesis; sulfite from sulfate: step 1/3. In terms of biological role, with CysN forms the ATP sulfurylase (ATPS) that catalyzes the adenylation of sulfate producing adenosine 5'-phosphosulfate (APS) and diphosphate, the first enzymatic step in sulfur assimilation pathway. APS synthesis involves the formation of a high-energy phosphoric-sulfuric acid anhydride bond driven by GTP hydrolysis by CysN coupled to ATP hydrolysis by CysD. The polypeptide is Sulfate adenylyltransferase subunit 2 (Pseudomonas fluorescens (strain Pf0-1)).